Consider the following 209-residue polypeptide: Transcription elongation factor A protein-like 4 (209 aa).

Residue M1 is modified to N-acetylmethionine. The disordered stretch occupies residues 1 to 125; the sequence is MEKLYNENEG…VPRKAKRKTN (125 aa). Residues 25–96 show a composition bias toward basic and acidic residues; sequence QDERKPEVAC…GSEREGKPES (72 aa). A phosphoserine mark is found at S88 and S96.

It belongs to the TFS-II family. TFA subfamily.

The protein localises to the nucleus. Functionally, may be involved in transcriptional regulation. The protein is Transcription elongation factor A protein-like 4 (TCEAL4) of Pongo abelii (Sumatran orangutan).